The following is a 358-amino-acid chain: Very long chain fatty acid elongase AAEL008004 (358 aa).

7 helical membrane passes run 26–46 (WPLM…VYLV), 66–86 (LILY…EIGI), 115–135 (ACWW…FFVM), 147–167 (VIHH…TPGG), 171–191 (FFGL…LFTA), 207–227 (TSLQ…LLFI), and 234–254 (AFVW…NEFY). A compositionally biased stretch (polar residues) spans 285 to 295 (SAVSSNGSAIT). A disordered region spans residues 285–322 (SAVSSNGSAITANGHHGKNGSVHHHSNGSATSNGTSLL). The span at 299–310 (HHGKNGSVHHHS) shows a compositional bias: basic residues. The span at 311-322 (NGSATSNGTSLL) shows a compositional bias: polar residues.

The protein belongs to the ELO family.

Its subcellular location is the membrane. It catalyses the reaction a very-long-chain acyl-CoA + malonyl-CoA + H(+) = a very-long-chain 3-oxoacyl-CoA + CO2 + CoA. In terms of biological role, could be implicated in synthesis of very long chain fatty acids. The chain is Very long chain fatty acid elongase AAEL008004 from Aedes aegypti (Yellowfever mosquito).